A 687-amino-acid chain; its full sequence is Fatty acid oxidation complex subunit alpha (687 aa).

The tract at residues 1–191 is enoyl-CoA hydratase; it reads MKNTSAFAWT…KLGVVDASVP (191 aa). The interval 307–687 is 3-hydroxyacyl-CoA dehydrogenase; the sequence is KSIDYVGVLG…ADKYGDRFIE (381 aa).

It in the N-terminal section; belongs to the enoyl-CoA hydratase/isomerase family. The protein in the central section; belongs to the 3-hydroxyacyl-CoA dehydrogenase family. As to quaternary structure, heterotetramer of two alpha chains (FadJ) and two beta chains (FadI).

The protein resides in the cytoplasm. The enzyme catalyses a (3S)-3-hydroxyacyl-CoA = a (2E)-enoyl-CoA + H2O. It carries out the reaction a 4-saturated-(3S)-3-hydroxyacyl-CoA = a (3E)-enoyl-CoA + H2O. The catalysed reaction is a (3S)-3-hydroxyacyl-CoA + NAD(+) = a 3-oxoacyl-CoA + NADH + H(+). It catalyses the reaction (3S)-3-hydroxybutanoyl-CoA = (3R)-3-hydroxybutanoyl-CoA. The protein operates within lipid metabolism; fatty acid beta-oxidation. Its function is as follows. Catalyzes the formation of a hydroxyacyl-CoA by addition of water on enoyl-CoA. Also exhibits 3-hydroxyacyl-CoA epimerase and 3-hydroxyacyl-CoA dehydrogenase activities. This chain is Fatty acid oxidation complex subunit alpha, found in Aliivibrio fischeri (strain ATCC 700601 / ES114) (Vibrio fischeri).